A 350-amino-acid chain; its full sequence is Biotin synthase (350 aa).

Residues 54–278 enclose the Radical SAM core domain; sequence REIQLSTLLS…TMPQSYVRLS (225 aa). [4Fe-4S] cluster contacts are provided by Cys-69, Cys-73, and Cys-76. [2Fe-2S] cluster is bound by residues Cys-113, Cys-144, Cys-204, and Arg-276.

This sequence belongs to the radical SAM superfamily. Biotin synthase family. Homodimer. The cofactor is [4Fe-4S] cluster. Requires [2Fe-2S] cluster as cofactor.

It carries out the reaction (4R,5S)-dethiobiotin + (sulfur carrier)-SH + 2 reduced [2Fe-2S]-[ferredoxin] + 2 S-adenosyl-L-methionine = (sulfur carrier)-H + biotin + 2 5'-deoxyadenosine + 2 L-methionine + 2 oxidized [2Fe-2S]-[ferredoxin]. It functions in the pathway cofactor biosynthesis; biotin biosynthesis; biotin from 7,8-diaminononanoate: step 2/2. Functionally, catalyzes the conversion of dethiobiotin (DTB) to biotin by the insertion of a sulfur atom into dethiobiotin via a radical-based mechanism. The sequence is that of Biotin synthase from Neisseria meningitidis serogroup C (strain 053442).